The following is a 300-amino-acid chain: Tyrosine recombinase XerC (300 aa).

In terms of domain architecture, Core-binding (CB) spans 2–88 (TQEGKLEQQF…SLRSFYTFLL (87 aa)). A Tyr recombinase domain is found at 109-294 (RLPKFFYSEE…TKEHLKSTYM (186 aa)). Catalysis depends on residues arginine 150, lysine 174, histidine 246, arginine 249, and histidine 272. Residue tyrosine 281 is the O-(3'-phospho-DNA)-tyrosine intermediate of the active site.

The protein belongs to the 'phage' integrase family. XerC subfamily. In terms of assembly, forms a cyclic heterotetrameric complex composed of two molecules of XerC and two molecules of XerD.

It localises to the cytoplasm. Functionally, site-specific tyrosine recombinase, which acts by catalyzing the cutting and rejoining of the recombining DNA molecules. The XerC-XerD complex is essential to convert dimers of the bacterial chromosome into monomers to permit their segregation at cell division. It also contributes to the segregational stability of plasmids. This chain is Tyrosine recombinase XerC, found in Listeria welshimeri serovar 6b (strain ATCC 35897 / DSM 20650 / CCUG 15529 / CIP 8149 / NCTC 11857 / SLCC 5334 / V8).